The sequence spans 306 residues: Glutaminase (306 aa).

Residues serine 61, asparagine 111, glutamate 157, asparagine 164, tyrosine 188, tyrosine 240, and valine 258 each contribute to the substrate site.

This sequence belongs to the glutaminase family. Homotetramer.

The enzyme catalyses L-glutamine + H2O = L-glutamate + NH4(+). The chain is Glutaminase from Pseudoalteromonas atlantica (strain T6c / ATCC BAA-1087).